The primary structure comprises 742 residues: Phosphoribosylformylglycinamidine synthase subunit PurL (742 aa).

Residue His54 is part of the active site. 2 residues coordinate ATP: Tyr57 and Lys96. Glu98 is a binding site for Mg(2+). Residues 99–102 (SHNH) and Arg121 each bind substrate. The Proton acceptor role is filled by His100. Asp122 provides a ligand contact to Mg(2+). Position 245 (Gln245) interacts with substrate. Asp273 lines the Mg(2+) pocket. 317–319 (ESQ) lines the substrate pocket. Asp500 and Gly537 together coordinate ATP. Asn538 is a Mg(2+) binding site. Ser540 is a substrate binding site.

Belongs to the FGAMS family. Monomer. Part of the FGAM synthase complex composed of 1 PurL, 1 PurQ and 2 PurS subunits.

Its subcellular location is the cytoplasm. It catalyses the reaction N(2)-formyl-N(1)-(5-phospho-beta-D-ribosyl)glycinamide + L-glutamine + ATP + H2O = 2-formamido-N(1)-(5-O-phospho-beta-D-ribosyl)acetamidine + L-glutamate + ADP + phosphate + H(+). It participates in purine metabolism; IMP biosynthesis via de novo pathway; 5-amino-1-(5-phospho-D-ribosyl)imidazole from N(2)-formyl-N(1)-(5-phospho-D-ribosyl)glycinamide: step 1/2. Functionally, part of the phosphoribosylformylglycinamidine synthase complex involved in the purines biosynthetic pathway. Catalyzes the ATP-dependent conversion of formylglycinamide ribonucleotide (FGAR) and glutamine to yield formylglycinamidine ribonucleotide (FGAM) and glutamate. The FGAM synthase complex is composed of three subunits. PurQ produces an ammonia molecule by converting glutamine to glutamate. PurL transfers the ammonia molecule to FGAR to form FGAM in an ATP-dependent manner. PurS interacts with PurQ and PurL and is thought to assist in the transfer of the ammonia molecule from PurQ to PurL. The chain is Phosphoribosylformylglycinamidine synthase subunit PurL from Oceanobacillus iheyensis (strain DSM 14371 / CIP 107618 / JCM 11309 / KCTC 3954 / HTE831).